Here is a 538-residue protein sequence, read N- to C-terminus: MTRECPSPAPGPGAPLSGSVLAEAAVVFAVVLSIHATVWDRYSWCAVALAVQAFYVQYKWDRLLQQGSAVFQFRMSANSGLLPASMVMPLLGLVMKERCQTAGNPFFERFGIVVAATGMAVALFSSVLALGITRPVPTNTCVILGLAGGVIIYIMKHSLSVGEVIEVLEVLLIFVYLNMILLYLLPRCFTPGEALLVLGGISFVLNQLIKRSLTLVESQGDPVDFFLLVVVVGMVLMGIFFSTLFVFMDSGTWASSIFFHLMTCVLSLGVVLPWLHRLIRRNPLLWLLQFLFQTDTRIYLLAYWSLLATLACLVVLYQNAKRSSSESKKHQAPTIARKYFHLIVVATYIPGIIFDRPLLYVAATVCLAVFIFLEYVRYFRIKPLGHTLRSFLSLFLDERDSGPLILTHIYLLLGMSLPIWLIPRPCTQKGSLGGARALVPYAGVLAVGVGDTVASIFGSTMGEIRWPGTKKTFEGTMTSIFAQIISVALILIFDSGVDLNYSYAWILGSISTVSLLEAYTTQIDNLLLPLYLLILLMA.

Residues 1–13 are Lumenal-facing; that stretch reads MTRECPSPAPGPG. Residues 14-34 traverse the membrane as a helical segment; it reads APLSGSVLAEAAVVFAVVLSI. At 35–74 the chain is on the cytoplasmic side; it reads HATVWDRYSWCAVALAVQAFYVQYKWDRLLQQGSAVFQFR. The chain crosses the membrane as a helical span at residues 75-95; the sequence is MSANSGLLPASMVMPLLGLVM. The Lumenal segment spans residues 96–111; sequence KERCQTAGNPFFERFG. A helical membrane pass occupies residues 112–132; sequence IVVAATGMAVALFSSVLALGI. The Cytoplasmic segment spans residues 133–134; it reads TR. Residues 135–155 traverse the membrane as a helical segment; it reads PVPTNTCVILGLAGGVIIYIM. At 156–163 the chain is on the lumenal side; the sequence is KHSLSVGE. The chain crosses the membrane as a helical span at residues 164–184; sequence VIEVLEVLLIFVYLNMILLYL. The Cytoplasmic segment spans residues 185-188; that stretch reads LPRC. The chain crosses the membrane as a helical span at residues 189 to 209; that stretch reads FTPGEALLVLGGISFVLNQLI. The Lumenal portion of the chain corresponds to 210 to 224; it reads KRSLTLVESQGDPVD. Residues 225–245 traverse the membrane as a helical segment; that stretch reads FFLLVVVVGMVLMGIFFSTLF. The Cytoplasmic segment spans residues 246-254; that stretch reads VFMDSGTWA. A helical membrane pass occupies residues 255-275; that stretch reads SSIFFHLMTCVLSLGVVLPWL. Residues 276 to 297 lie on the Lumenal side of the membrane; it reads HRLIRRNPLLWLLQFLFQTDTR. Residues 298–318 form a helical membrane-spanning segment; the sequence is IYLLAYWSLLATLACLVVLYQ. At 319–337 the chain is on the cytoplasmic side; that stretch reads NAKRSSSESKKHQAPTIAR. The chain crosses the membrane as a helical span at residues 338–354; sequence KYFHLIVVATYIPGIIF. Topologically, residues 355–359 are lumenal; the sequence is DRPLL. The chain crosses the membrane as a helical span at residues 360–380; that stretch reads YVAATVCLAVFIFLEYVRYFR. Residues 381–401 are Cytoplasmic-facing; that stretch reads IKPLGHTLRSFLSLFLDERDS. A helical transmembrane segment spans residues 402 to 422; the sequence is GPLILTHIYLLLGMSLPIWLI. Over 423 to 436 the chain is Lumenal; that stretch reads PRPCTQKGSLGGAR. The helical transmembrane segment at 437–457 threads the bilayer; the sequence is ALVPYAGVLAVGVGDTVASIF. Residues 458-472 are Cytoplasmic-facing; the sequence is GSTMGEIRWPGTKKT. Residues 459–474 are CTP-binding; it reads STMGEIRWPGTKKTFE. A helical membrane pass occupies residues 473-493; sequence FEGTMTSIFAQIISVALILIF. Residues 494-495 lie on the Lumenal side of the membrane; sequence DS. The helical transmembrane segment at 496–516 threads the bilayer; the sequence is GVDLNYSYAWILGSISTVSLL. Over 517 to 538 the chain is Cytoplasmic; that stretch reads EAYTTQIDNLLLPLYLLILLMA.

The protein belongs to the polyprenol kinase family. Ubiquitous.

The protein resides in the endoplasmic reticulum membrane. The enzyme catalyses a di-trans,poly-cis-dolichol + CTP = a di-trans,poly-cis-dolichyl phosphate + CDP + H(+). The protein operates within protein modification; protein glycosylation. In terms of biological role, catalyzes CTP-mediated phosphorylation of dolichol, the terminal step in de novo dolichyl monophosphate (Dol-P) biosynthesis. Dol-P is a lipid carrier essential for the synthesis of N-linked and O-linked oligosaccharides and for GPI anchors. The protein is Dolichol kinase (DOLK) of Homo sapiens (Human).